Consider the following 102-residue polypeptide: Large ribosomal subunit protein bL21 (102 aa).

It belongs to the bacterial ribosomal protein bL21 family. Part of the 50S ribosomal subunit. Contacts protein L20.

This protein binds to 23S rRNA in the presence of protein L20. The polypeptide is Large ribosomal subunit protein bL21 (Campylobacter jejuni subsp. jejuni serotype O:6 (strain 81116 / NCTC 11828)).